Reading from the N-terminus, the 256-residue chain is Ribonuclease 3 (256 aa).

In terms of domain architecture, RNase III spans 6-128 (LATLETRLDH…LFGAVFLDAG (123 aa)). Residue Glu-41 participates in Mg(2+) binding. Residue Asp-45 is part of the active site. Asp-114 and Glu-117 together coordinate Mg(2+). Glu-117 is a catalytic residue. In terms of domain architecture, DRBM spans 155-225 (DAKTLLQEFL…AKVALEAAQA (71 aa)).

The protein belongs to the ribonuclease III family. Homodimer. Mg(2+) is required as a cofactor.

The protein resides in the cytoplasm. The catalysed reaction is Endonucleolytic cleavage to 5'-phosphomonoester.. In terms of biological role, digests double-stranded RNA. Involved in the processing of primary rRNA transcript to yield the immediate precursors to the large and small rRNAs (23S and 16S). Processes some mRNAs, and tRNAs when they are encoded in the rRNA operon. Processes pre-crRNA and tracrRNA of type II CRISPR loci if present in the organism. The sequence is that of Ribonuclease 3 from Bordetella bronchiseptica (strain ATCC BAA-588 / NCTC 13252 / RB50) (Alcaligenes bronchisepticus).